The sequence spans 412 residues: Protein translocase subunit SecY (412 aa).

A run of 9 helical transmembrane segments spans residues 17-37 (IFLT…PVPG), 58-78 (IFSG…VPYI), 117-137 (ALGW…PYVF), 143-163 (FVVQ…WFSE), 170-190 (IGNG…PKLI), 251-271 (VMPI…GQVI), 293-313 (YLIF…SLII), 350-370 (TFLG…IENI), and 372-392 (SIST…GVAI).

This sequence belongs to the SecY/SEC61-alpha family. As to quaternary structure, component of the plastid Sec protein translocase complex, which is composed of at least SecY and SecE.

It localises to the plastid. The protein resides in the chloroplast thylakoid membrane. The central subunit of the protein translocation channel SecYE. Consists of two halves formed by TMs 1-5 and 6-10. These two domains form a lateral gate at the front which open onto the bilayer between TMs 2 and 7, and are clamped together by SecE at the back. The channel is closed by both a pore ring composed of hydrophobic SecY resides and a short helix (helix 2A) on the extracellular side of the membrane which forms a plug. The polypeptide is Protein translocase subunit SecY (Pyrenomonas salina).